An 82-amino-acid chain; its full sequence is Small ribosomal subunit protein bS16 (82 aa).

The protein belongs to the bacterial ribosomal protein bS16 family.

The sequence is that of Small ribosomal subunit protein bS16 from Haemophilus ducreyi (strain 35000HP / ATCC 700724).